Here is a 212-residue protein sequence, read N- to C-terminus: Transmembrane protein 186 (212 aa).

The Mitochondrial matrix portion of the chain corresponds to 1-78 (MAAVLRAVAR…YLSRLKVAQT (78 aa)). A helical membrane pass occupies residues 79–99 (ALTVAALPPGLYCYSQGLMPF). The Mitochondrial intermembrane portion of the chain corresponds to 100–101 (SS). A helical transmembrane segment spans residues 102-122 (LCLAGGVAGFALAMLCWMSHF). Residues 123 to 212 (FRRLVGILYV…QVFGVLDALK (90 aa)) lie on the Mitochondrial matrix side of the membrane.

It belongs to the TMEM186 family. In terms of assembly, part of the mitochondrial complex I assembly/MCIA complex that comprises at least the core subunits TMEM126B, NDUFAF1, ECSIT and ACAD9 and complement subunits such as COA1 and TMEM186. Interacts with MT-ND3.

The protein localises to the mitochondrion inner membrane. Functionally, as part of the MCIA complex, required for efficient assembly of the mitochondrial complex I. The protein is Transmembrane protein 186 of Bos taurus (Bovine).